The chain runs to 78 residues: ATP synthase subunit a (78 aa).

The chain crosses the membrane as a helical span at residues 34–54 (LTNIGLYLTIGIFLILTYSLL).

The protein belongs to the ATPase A chain family. As to quaternary structure, F-type ATPases have 2 components, CF(1) - the catalytic core - and CF(0) - the membrane proton channel. CF(1) has five subunits: alpha(3), beta(3), gamma(1), delta(1), epsilon(1). CF(0) has three main subunits: a, b and c.

The protein resides in the mitochondrion inner membrane. Mitochondrial membrane ATP synthase (F(1)F(0) ATP synthase or Complex V) produces ATP from ADP in the presence of a proton gradient across the membrane which is generated by electron transport complexes of the respiratory chain. F-type ATPases consist of two structural domains, F(1) - containing the extramembraneous catalytic core and F(0) - containing the membrane proton channel, linked together by a central stalk and a peripheral stalk. During catalysis, ATP synthesis in the catalytic domain of F(1) is coupled via a rotary mechanism of the central stalk subunits to proton translocation. Key component of the proton channel; it may play a direct role in the translocation of protons across the membrane. This is ATP synthase subunit a (atp6) from Aspergillus amstelodami.